Consider the following 439-residue polypeptide: Ornithine aminotransferase, mitochondrial (439 aa).

The transit peptide at 1-25 directs the protein to the mitochondrion; in hepatic form; it reads MFSKLAHLQRFAVLSRGVHSSVASA. Residues 1 to 35 constitute a mitochondrion; in renal form transit peptide; the sequence is MFSKLAHLQRFAVLSRGVHSSVASATSVATKKTVQ. N6-acetyllysine is present on residues Lys49 and Lys66. At Lys102 the chain carries N6-succinyllysine. At Lys107 the chain carries N6-acetyllysine; alternate. N6-succinyllysine; alternate is present on Lys107. Residue Lys292 is modified to N6-(pyridoxal phosphate)lysine. Lys362 carries the N6-acetyllysine; alternate modification. Lys362 is subject to N6-succinyllysine; alternate. N6-acetyllysine occurs at positions 386 and 392. Lys405 bears the N6-acetyllysine; alternate mark. At Lys405 the chain carries N6-succinyllysine; alternate. N6-acetyllysine is present on Lys421.

Belongs to the class-III pyridoxal-phosphate-dependent aminotransferase family. In terms of assembly, homohexamer. It depends on pyridoxal 5'-phosphate as a cofactor.

The protein resides in the mitochondrion matrix. It catalyses the reaction L-ornithine + 2-oxoglutarate = L-glutamate 5-semialdehyde + L-glutamate. The protein operates within amino-acid biosynthesis; L-proline biosynthesis; L-glutamate 5-semialdehyde from L-ornithine: step 1/1. Functionally, catalyzes the reversible interconversion of L-ornithine and 2-oxoglutarate to L-glutamate semialdehyde and L-glutamate. In Homo sapiens (Human), this protein is Ornithine aminotransferase, mitochondrial (OAT).